We begin with the raw amino-acid sequence, 397 residues long: MALLRRPTVSSDLKNIDTGVNPKAKSHVTIRRAVLEEIGNKVRSRAAPVAKKPQNTKIPVQPTKVTHVNKQPKPTASVKPVQMETLAPKDPPAPEDVSMKEENLCQAFSDALLCKIEDIDNEDWENPQLCSDYVKDIYQYLRQLEVLQSINPHFLDGRDINGRMRAILVDWLVQVHSKFRLLQETLYMCIAIMDRFLQAQPVCRKKLQLVGITALLLASKYEEMFSPNIEDFVYITDNAYTSSQIREMETLILKELKFELGRPLPLHFLRRASKAGEVDVEQHTLAKYLMELTLIDYDMVHYHPSQVAAAASCLSQKVLGQGKWNLKQQYYTGYMETEVLEVMQHMAKNVVKVNENLTKFIAVKNKYASSRLLKISTIPQLNSKTIKDLASPLMGRL.

2 disordered regions span residues 1–20 (MALL…DTGV) and 64–97 (KVTH…PEDV). Thr8 carries the post-translational modification Phosphothreonine. At Ser11 the chain carries Phosphoserine. The segment covering 64–74 (KVTHVNKQPKP) has biased composition (polar residues). A phosphoserine mark is found at Ser77, Ser98, and Ser391.

The protein belongs to the cyclin family. Cyclin AB subfamily. As to quaternary structure, interacts with the CDK1 protein kinase to form a serine/threonine kinase holoenzyme complex also known as maturation promoting factor (MPF). The cyclin subunit imparts substrate specificity to the complex.

Its function is as follows. Essential for the control of the cell cycle at the G2/M (mitosis) transition. The protein is G2/mitotic-specific cyclin-B2 (CCNB2) of Mesocricetus auratus (Golden hamster).